Reading from the N-terminus, the 323-residue chain is Protein translocase subunit SecF (323 aa).

6 helical membrane-spanning segments follow: residues 19–39 (GVIV…FKGF), 138–158 (ILSL…RYEW), 162–182 (LASV…VIVF), 189–209 (EVIA…IIIF), 244–264 (LTVF…IIGF), and 269–289 (LIGT…VALL).

The protein belongs to the SecD/SecF family. SecF subfamily. Forms a complex with SecD. Part of the essential Sec protein translocation apparatus which comprises SecA, SecYEG and auxiliary proteins SecDF-YajC and YidC.

The protein resides in the cell inner membrane. Its function is as follows. Part of the Sec protein translocase complex. Interacts with the SecYEG preprotein conducting channel. SecDF uses the proton motive force (PMF) to complete protein translocation after the ATP-dependent function of SecA. This chain is Protein translocase subunit SecF, found in Helicobacter pylori (strain J99 / ATCC 700824) (Campylobacter pylori J99).